The sequence spans 314 residues: BTB/POZ domain-containing adapter for CUL3-mediated RhoA degradation protein 2 (314 aa).

Residues 32–100 enclose the BTB domain; the sequence is KYVRLNVGGS…LRDDTIALPK (69 aa).

The protein belongs to the BACURD family. Component of the BCR(TNFAIP1) E3 ubiquitin ligase complex, at least composed of CUL3, TNFAIP1/BACURD2 and RBX1.

It localises to the cytoplasm. Its subcellular location is the nucleus. The protein localises to the endosome. It functions in the pathway protein modification; protein ubiquitination. Its function is as follows. Substrate-specific adapter of a BCR (BTB-CUL3-RBX1) E3 ubiquitin-protein ligase complex involved in regulation of cytoskeleton structure. The BCR(TNFAIP1) E3 ubiquitin ligase complex mediates the ubiquitination of target proteins, leading to their degradation by the proteasome. The sequence is that of BTB/POZ domain-containing adapter for CUL3-mediated RhoA degradation protein 2 (TNFAIP1) from Gallus gallus (Chicken).